Reading from the N-terminus, the 1106-residue chain is MPKRNDLNKVLIIGSGPIIIGQAVEFDYAGTQACSVLREEGIEVVLVNSNPATIMTDTNMADKVYLEPLEKDYIIKIIEKERPDGLIATMGGQVGLNLAMELVDSGILDKYEVDLLGTTMSSIKKAEDRDVFKTTMNDIGEPIPESKIVSTVDQAKDFAKNIGYPVIVRPAYTLGGTGGGVAQNEQQLSQIASNGIRSSLINQILVERCVIGWKEVEYEVMRDKKGNCITICNMENMDPVGVHTGDSIVAAPSQTLTNQEHQMLRQAALKIIGELQIEGGCNIQFALDPHSNDYYVIEVNPRVSRSSALASKATGYPIARVASKIAIGYSLDEIYNQVTGKTSACFEPSLDYVVLKLPRFPFDKFDLADRQLGTQMKATGEVMSIGRNFENAFLKALRSLEIDLDDLHQSIQEVDKELRQEEILKQLGKQTDERMFWLLQAIRKQISLQDIHDLTSIDMFFLQKLKNIVSYELEFSQLESQFKAESDEKNVEEIEEKLVEKKISSSNQQLQLLSEAKEAGLSDTMISASTGLTEEQIKNIRLQHNITPAYKMVDTCAGEFEANTPYYYSAYNEENEAIPPSEPTHDKRVLVLGAGPIRIGQGVEFDYCSVHSVMALKDLGYESLIINNNPETVSTDFNISDRLYFEPLFTEDVNSVIAQEKPQGVITQFGGQTAVNLARPLANDGAEVLGTSVSDMDRAENRDKFDQLLNKLGIDRPKGKTATSTKEAKEIADELGYPLVVRPSYVLGGRAMEVVYTPEDLETYMTWAVEVSPEYPVLIDQFLQGMEIEIDAVCDGQDVIIPGIMEHIERAGVHSGDSMAMFPAKSLDEITRDKIVSYTEALAKGLNIKGIINIQYVVYNGKVYVIEVNPRASRTVPFISKITGIPMVKIATKAMMGQSFQDQGYKPGLMPEPDYYAVKAPVFSFAKLTRVDTSLGPEMKSTGEVMGIDYDLNTALYKAMLASGFSINLNGGVLVTVADRDKEAVRPLVERFQKLGLKIFATSGTAEFLRNQGIDVEQVPKIVDESPNIIDLIREGQINYVINTFTIGKEPARDGFKIRRAAVENGIPCLTSLDTASALLTAMESLDRGESKQVKSLQDYLKELSN.

The carboxyphosphate synthetic domain stretch occupies residues 1 to 401 (MPKRNDLNKV…AFLKALRSLE (401 aa)). 12 residues coordinate ATP: Arg-129, Arg-169, Gly-175, Gly-176, Arg-208, Val-210, Glu-215, Gly-241, Val-242, His-243, Gln-284, and Glu-298. The region spanning 133–327 (KTTMNDIGEP…IARVASKIAI (195 aa)) is the ATP-grasp 1 domain. The Mg(2+) site is built by Gln-284, Glu-298, and Asn-300. Residues Gln-284, Glu-298, and Asn-300 each contribute to the Mn(2+) site. Residues 402-577 (IDLDDLHQSI…YSAYNEENEA (176 aa)) are oligomerization domain. The tract at residues 578–964 (IPPSEPTHDK…ALYKAMLASG (387 aa)) is carbamoyl phosphate synthetic domain. Positions 706–896 (DQLLNKLGID…MVKIATKAMM (191 aa)) constitute an ATP-grasp 2 domain. Residues Arg-742, Gln-781, Leu-783, Glu-787, Gly-812, Val-813, His-814, Ser-815, Gln-855, and Glu-867 each contribute to the ATP site. Positions 855, 867, and 869 each coordinate Mg(2+). Gln-855, Glu-867, and Asn-869 together coordinate Mn(2+). The 142-residue stretch at 965 to 1106 (FSINLNGGVL…LQDYLKELSN (142 aa)) folds into the MGS-like domain. Residues 965-1106 (FSINLNGGVL…LQDYLKELSN (142 aa)) form an allosteric domain region.

It belongs to the CarB family. In terms of assembly, composed of two chains; the small (or glutamine) chain promotes the hydrolysis of glutamine to ammonia, which is used by the large (or ammonia) chain to synthesize carbamoyl phosphate. Tetramer of heterodimers (alpha,beta)4. Mg(2+) is required as a cofactor. Requires Mn(2+) as cofactor.

It catalyses the reaction hydrogencarbonate + L-glutamine + 2 ATP + H2O = carbamoyl phosphate + L-glutamate + 2 ADP + phosphate + 2 H(+). The enzyme catalyses hydrogencarbonate + NH4(+) + 2 ATP = carbamoyl phosphate + 2 ADP + phosphate + 2 H(+). It participates in amino-acid biosynthesis; L-arginine biosynthesis; carbamoyl phosphate from bicarbonate: step 1/1. Its pathway is pyrimidine metabolism; UMP biosynthesis via de novo pathway; (S)-dihydroorotate from bicarbonate: step 1/3. Large subunit of the glutamine-dependent carbamoyl phosphate synthetase (CPSase). CPSase catalyzes the formation of carbamoyl phosphate from the ammonia moiety of glutamine, carbonate, and phosphate donated by ATP, constituting the first step of 2 biosynthetic pathways, one leading to arginine and/or urea and the other to pyrimidine nucleotides. The large subunit (synthetase) binds the substrates ammonia (free or transferred from glutamine from the small subunit), hydrogencarbonate and ATP and carries out an ATP-coupled ligase reaction, activating hydrogencarbonate by forming carboxy phosphate which reacts with ammonia to form carbamoyl phosphate. This is Carbamoyl phosphate synthase large chain from Natranaerobius thermophilus (strain ATCC BAA-1301 / DSM 18059 / JW/NM-WN-LF).